The following is a 405-amino-acid chain: Peroxisome biogenesis factor 3 (405 aa).

Topologically, residues 1–26 (MENFQFEDLSPNKVSKVYQDLKKFGS) are cytoplasmic. A helical membrane pass occupies residues 27–49 (FLYNHKMGVFLVSFSSGVAYLYH). Over 50-124 (NITQSHKRKQ…EKLKLTDQLK (75 aa)) the chain is Peroxisomal. The chain crosses the membrane as a helical span at residues 125–144 (VSIITKLFSVLYIIPMVTIF). Topologically, residues 145–405 (NRLQINLIGK…NDLDFNKVQF (261 aa)) are cytoplasmic.

The protein belongs to the peroxin-3 family.

It localises to the peroxisome membrane. Its function is as follows. Involved in peroxisome biosynthesis. The polypeptide is Peroxisome biogenesis factor 3 (pex3) (Dictyostelium discoideum (Social amoeba)).